A 138-amino-acid polypeptide reads, in one-letter code: FUN14 domain-containing protein fndc-1 (138 aa).

2 helical membrane passes run 37 to 56 (PMVQ…YFVT) and 61 to 78 (LVAA…FAIH). 2 N-linked (GlcNAc...) asparagine glycosylation sites follow: Asn-85 and Asn-111.

The protein belongs to the FUN14 family. In terms of tissue distribution, broadly expressed in somatic tissues. Expressed in the hermaphrodite spermatheca and male gonad. Expressed in spermatids, but not expressed in oocytes.

Its subcellular location is the mitochondrion outer membrane. Functionally, mitophagy receptor which plays a role in paternal mitochondria degradation in embryos after the two-cell stage. This chain is FUN14 domain-containing protein fndc-1, found in Caenorhabditis elegans.